The sequence spans 475 residues: Ribulose bisphosphate carboxylase large chain (475 aa).

The propeptide occupies 1-2 (MS). Position 3 is an N-acetylproline (P3). An N6,N6,N6-trimethyllysine modification is found at K14. Substrate is bound by residues N123 and T173. Catalysis depends on K175, which acts as the Proton acceptor. Residue K177 coordinates substrate. Mg(2+) contacts are provided by K201, D203, and E204. N6-carboxylysine is present on K201. The Proton acceptor role is filled by H294. Substrate is bound by residues R295, H327, and S379.

Belongs to the RuBisCO large chain family. Type I subfamily. As to quaternary structure, heterohexadecamer of 8 large chains and 8 small chains; disulfide-linked. The disulfide link is formed within the large subunit homodimers. Requires Mg(2+) as cofactor. In terms of processing, the disulfide bond which can form in the large chain dimeric partners within the hexadecamer appears to be associated with oxidative stress and protein turnover.

The protein resides in the plastid. It is found in the chloroplast. The enzyme catalyses 2 (2R)-3-phosphoglycerate + 2 H(+) = D-ribulose 1,5-bisphosphate + CO2 + H2O. The catalysed reaction is D-ribulose 1,5-bisphosphate + O2 = 2-phosphoglycolate + (2R)-3-phosphoglycerate + 2 H(+). Its function is as follows. RuBisCO catalyzes two reactions: the carboxylation of D-ribulose 1,5-bisphosphate, the primary event in carbon dioxide fixation, as well as the oxidative fragmentation of the pentose substrate in the photorespiration process. Both reactions occur simultaneously and in competition at the same active site. The polypeptide is Ribulose bisphosphate carboxylase large chain (Ostrya virginiana (American hophornbeam)).